A 228-amino-acid polypeptide reads, in one-letter code: L-ribulose-5-phosphate 4-epimerase UlaF (228 aa).

Substrate-binding positions include 26 to 27 (GN), 43 to 44 (SG), and 72 to 73 (SS). Aspartate 74, histidine 93, and histidine 95 together coordinate Zn(2+). Aspartate 118 serves as the catalytic Proton donor/acceptor. Histidine 167 is a binding site for Zn(2+). The Proton donor/acceptor role is filled by tyrosine 225.

The protein belongs to the aldolase class II family. AraD/FucA subfamily. Zn(2+) serves as cofactor.

It carries out the reaction L-ribulose 5-phosphate = D-xylulose 5-phosphate. It participates in cofactor degradation; L-ascorbate degradation; D-xylulose 5-phosphate from L-ascorbate: step 4/4. Functionally, catalyzes the isomerization of L-ribulose 5-phosphate to D-xylulose 5-phosphate. Is involved in the anaerobic L-ascorbate utilization. This is L-ribulose-5-phosphate 4-epimerase UlaF from Escherichia coli (strain SE11).